The primary structure comprises 73 residues: Large ribosomal subunit protein bL31 (73 aa).

It belongs to the bacterial ribosomal protein bL31 family. Type A subfamily. In terms of assembly, part of the 50S ribosomal subunit.

Functionally, binds the 23S rRNA. The polypeptide is Large ribosomal subunit protein bL31 (Rhizobium rhizogenes (strain K84 / ATCC BAA-868) (Agrobacterium radiobacter)).